The chain runs to 494 residues: Chromosomal replication initiator protein DnaA (494 aa).

A domain I, interacts with DnaA modulators region spans residues 1–103 (MTTDPDPPFV…PVSDESDSGS (103 aa)). The interval 94-117 (PVSDESDSGSVASPAPVAAADPDD) is disordered. The segment covering 101-113 (SGSVASPAPVAAA) has biased composition (low complexity). The tract at residues 104 to 153 (VASPAPVAAADPDDDVVDDDLAARASAEESWPSYFTNRANRAAEDDATSV) is domain II. The tract at residues 154–370 (NLNRRYTFDT…GALIRVTAFA (217 aa)) is domain III, AAA+ region. 4 residues coordinate ATP: Gly-198, Gly-200, Lys-201, and Thr-202. The tract at residues 371 to 494 (SLNKTPIDKS…TTRIRQRAKR (124 aa)) is domain IV, binds dsDNA.

This sequence belongs to the DnaA family. Oligomerizes as a right-handed, spiral filament on DNA at oriC.

It localises to the cytoplasm. Functionally, plays an essential role in the initiation and regulation of chromosomal replication. ATP-DnaA binds to the origin of replication (oriC) to initiate formation of the DNA replication initiation complex once per cell cycle. Binds the DnaA box (a 9 base pair repeat at the origin) and separates the double-stranded (ds)DNA. Forms a right-handed helical filament on oriC DNA; dsDNA binds to the exterior of the filament while single-stranded (ss)DNA is stabiized in the filament's interior. The ATP-DnaA-oriC complex binds and stabilizes one strand of the AT-rich DNA unwinding element (DUE), permitting loading of DNA polymerase. After initiation quickly degrades to an ADP-DnaA complex that is not apt for DNA replication. Binds acidic phospholipids. This Mycolicibacterium vanbaalenii (strain DSM 7251 / JCM 13017 / BCRC 16820 / KCTC 9966 / NRRL B-24157 / PYR-1) (Mycobacterium vanbaalenii) protein is Chromosomal replication initiator protein DnaA.